The chain runs to 266 residues: Undecaprenyl-diphosphatase (266 aa).

Helical transmembrane passes span 1–21 (METF…FLPI), 39–59 (QGFS…VIYF), 87–107 (WWII…KDFI), 111–131 (LRNT…LWWA), 149–169 (ALLI…RSGA), 183–203 (AAAK…AILV), 218–238 (ALGI…YYFL), and 246–266 (MTPF…LILW).

Belongs to the UppP family.

It is found in the cell inner membrane. It carries out the reaction di-trans,octa-cis-undecaprenyl diphosphate + H2O = di-trans,octa-cis-undecaprenyl phosphate + phosphate + H(+). Functionally, catalyzes the dephosphorylation of undecaprenyl diphosphate (UPP). Confers resistance to bacitracin. The sequence is that of Undecaprenyl-diphosphatase from Shewanella denitrificans (strain OS217 / ATCC BAA-1090 / DSM 15013).